We begin with the raw amino-acid sequence, 415 residues long: Gamma-glutamyl phosphate reductase (415 aa).

Belongs to the gamma-glutamyl phosphate reductase family.

The protein localises to the cytoplasm. The catalysed reaction is L-glutamate 5-semialdehyde + phosphate + NADP(+) = L-glutamyl 5-phosphate + NADPH + H(+). The protein operates within amino-acid biosynthesis; L-proline biosynthesis; L-glutamate 5-semialdehyde from L-glutamate: step 2/2. Catalyzes the NADPH-dependent reduction of L-glutamate 5-phosphate into L-glutamate 5-semialdehyde and phosphate. The product spontaneously undergoes cyclization to form 1-pyrroline-5-carboxylate. The polypeptide is Gamma-glutamyl phosphate reductase (Thermotoga petrophila (strain ATCC BAA-488 / DSM 13995 / JCM 10881 / RKU-1)).